Reading from the N-terminus, the 355-residue chain is UDP-3-O-acylglucosamine N-acyltransferase (355 aa).

Histidine 252 serves as the catalytic Proton acceptor.

Belongs to the transferase hexapeptide repeat family. LpxD subfamily. Homotrimer.

The enzyme catalyses a UDP-3-O-[(3R)-3-hydroxyacyl]-alpha-D-glucosamine + a (3R)-hydroxyacyl-[ACP] = a UDP-2-N,3-O-bis[(3R)-3-hydroxyacyl]-alpha-D-glucosamine + holo-[ACP] + H(+). It participates in bacterial outer membrane biogenesis; LPS lipid A biosynthesis. Its function is as follows. Catalyzes the N-acylation of UDP-3-O-acylglucosamine using 3-hydroxyacyl-ACP as the acyl donor. Is involved in the biosynthesis of lipid A, a phosphorylated glycolipid that anchors the lipopolysaccharide to the outer membrane of the cell. In Polynucleobacter asymbioticus (strain DSM 18221 / CIP 109841 / QLW-P1DMWA-1) (Polynucleobacter necessarius subsp. asymbioticus), this protein is UDP-3-O-acylglucosamine N-acyltransferase.